Consider the following 170-residue polypeptide: Adenine phosphoribosyltransferase (170 aa).

This sequence belongs to the purine/pyrimidine phosphoribosyltransferase family. In terms of assembly, homodimer.

It is found in the cytoplasm. It catalyses the reaction AMP + diphosphate = 5-phospho-alpha-D-ribose 1-diphosphate + adenine. It participates in purine metabolism; AMP biosynthesis via salvage pathway; AMP from adenine: step 1/1. Functionally, catalyzes a salvage reaction resulting in the formation of AMP, that is energically less costly than de novo synthesis. The chain is Adenine phosphoribosyltransferase from Fusobacterium nucleatum subsp. nucleatum (strain ATCC 25586 / DSM 15643 / BCRC 10681 / CIP 101130 / JCM 8532 / KCTC 2640 / LMG 13131 / VPI 4355).